The chain runs to 317 residues: MPGEQQAEEEEEEEMQEEMVLLVKGEEDEGEEKYEVVKLKIPMDNKEVPGEAPAPSADPARPHACPDCGRAFARRSTLAKHARTHTGERPFGCTECGRRFSQKSALTKHGRTHTGERPYECPECDKRFSAASNLRQHRRRHTGEKPYACAHCGRRFAQSSNYAQHLRVHTGEKPYACPDCGRAFGGSSCLARHRRTHTGERPYACADCGTRFAQSSALAKHRRVHTGEKPHRCAVCGRRFGHRSNLAEHARTHTGERPYPCAECGRRFRLSSHFIRHRRAHMRRRLYICAGCGRDFKLPPGATAATATERCPECEGS.

A compositionally biased stretch (acidic residues) spans 1 to 17 (MPGEQQAEEEEEEEMQE). The segment at 1–63 (MPGEQQAEEE…APSADPARPH (63 aa)) is disordered. Residue Lys-33 forms a Glycyl lysine isopeptide (Lys-Gly) (interchain with G-Cter in SUMO2) linkage. The span at 33–49 (KYEVVKLKIPMDNKEVP) shows a compositional bias: basic and acidic residues. C2H2-type zinc fingers lie at residues 63 to 85 (HACP…ARTH), 91 to 113 (FGCT…GRTH), 119 to 141 (YECP…RRRH), 147 to 169 (YACA…LRVH), 175 to 197 (YACP…RRTH), 203 to 225 (YACA…RRVH), 231 to 253 (HRCA…ARTH), and 259 to 281 (YPCA…RRAH).

It belongs to the krueppel C2H2-type zinc-finger protein family.

The protein localises to the nucleus. May be involved in transcriptional regulation. The sequence is that of Zinc finger protein 771 (ZNF771) from Homo sapiens (Human).